A 156-amino-acid chain; its full sequence is Baculoviral IAP repeat-containing protein 5.2 (156 aa).

One copy of the BIR repeat lies at 30 to 100 (RLSTFANWPF…KHSPSCLFIA (71 aa)). Threonine 46 is modified (phosphothreonine; by CDK1). Residues cysteine 69, cysteine 72, histidine 89, and cysteine 96 each contribute to the Zn(2+) site.

It belongs to the IAP family. As to quaternary structure, component of the CPC at least composed of survivin/birc5, incenp, cdca8/borealin and/or cdca9/dasra-A, and aurkb/aurora-B. Interacts directly with incenp (via N-terminus). Interacts with rxra; the interaction is stronger in the absence of 9-cis retinoic acids. Post-translationally, ubiquitination is required for centrosome-targeting.

The protein resides in the cytoplasm. Its subcellular location is the nucleus. The protein localises to the chromosome. It is found in the centromere. It localises to the cytoskeleton. The protein resides in the spindle. Functionally, component of the chromosomal passenger complex (CPC), a complex that acts as a key regulator of mitosis. The CPC complex has essential functions at the centromere in ensuring correct chromosome alignment and segregation and is required for chromatin-induced microtubule stabilization and spindle assembly. Does not appear to exhibit anti-apoptotic activity. Plays a role in increasing blood vessel size during development. The protein is Baculoviral IAP repeat-containing protein 5.2 (birc5.2) of Xenopus tropicalis (Western clawed frog).